A 247-amino-acid polypeptide reads, in one-letter code: DNA repair protein RecO (247 aa).

Belongs to the RecO family.

Its function is as follows. Involved in DNA repair and RecF pathway recombination. This is DNA repair protein RecO from Caldanaerobacter subterraneus subsp. tengcongensis (strain DSM 15242 / JCM 11007 / NBRC 100824 / MB4) (Thermoanaerobacter tengcongensis).